A 966-amino-acid polypeptide reads, in one-letter code: Serine/threonine-protein kinase 10 (966 aa).

2 positions are modified to phosphoserine: Ser-13 and Ser-20. In terms of domain architecture, Protein kinase spans 36–294 (WEIVGELGDG…AAQLLQHPFV (259 aa)). ATP-binding positions include 42–50 (LGDGAFGKV) and Lys-65. Asp-157 (proton acceptor) is an active-site residue. The segment at 175 to 224 (DFGVSAKNLKTLQKRDSFIGTPYWMAPEVVLCETMKDAPYDYKADIWSLG) is activation segment. At Thr-185 the chain carries Phosphothreonine; by autocatalysis. Ser-191 is modified (phosphoserine). Composition is skewed to polar residues over residues 341–363 (TQDS…DSST) and 371–392 (QEPV…TTSP). The segment at 341 to 497 (TQDSANVTQP…NLSTSESMDY (157 aa)) is disordered. Positions 421–430 (IQMDEEKQIP) are enriched in basic and acidic residues. Residues Ser-437, Ser-449, Ser-453, and Ser-484 each carry the phosphoserine modification. Residues 438 to 456 (PAASKSQKANQSRPNSSAL) show a composition bias toward polar residues. The span at 485–497 (DCSNLSTSESMDY) shows a compositional bias: polar residues. Residues Ser-513 and Ser-548 each carry the phosphoserine modification. A coiled-coil region spans residues 588 to 936 (LQLEQMHKRF…LNQKKREQEM (349 aa)). Disordered regions lie at residues 660-692 (KKEV…KKQR), 826-865 (INGA…ENQM), and 901-966 (LDES…GDAS). 2 stretches are compositionally biased toward basic and acidic residues: residues 834–865 (EQRE…ENQM) and 901–946 (LDES…EAEP). Thr-950 bears the Phosphothreonine mark. Over residues 950–966 (TPSKASNFFPYSSGDAS) the composition is skewed to polar residues.

Belongs to the protein kinase superfamily. STE Ser/Thr protein kinase family. STE20 subfamily. In terms of assembly, homodimer; homodimerization is required for activation segment autophosphorylation. Autophosphorylates following homodimerization, leading to activation of the protein. Expressed predominantly in lymphoid organs such as spleen, thymus, and bone marrow.

The protein resides in the cell membrane. The catalysed reaction is L-seryl-[protein] + ATP = O-phospho-L-seryl-[protein] + ADP + H(+). It carries out the reaction L-threonyl-[protein] + ATP = O-phospho-L-threonyl-[protein] + ADP + H(+). Inhibited by the pyrrole-indolinone inhibitor SU11274 (K00593): intercalates between the ATP-binding Lys-65 and alpha-C glutamate (Glu-81), resulting in a partial disordering of the lysine side chain. Also specifically inhibited by erlotinib. Slightly inhibited by gefitinib. Its function is as follows. Serine/threonine-protein kinase involved in regulation of lymphocyte migration. Phosphorylates MSN, and possibly PLK1. Involved in regulation of lymphocyte migration by mediating phosphorylation of ERM proteins such as MSN. Acts as a negative regulator of MAP3K1/MEKK1. May also act as a cell cycle regulator by acting as a polo kinase kinase: mediates phosphorylation of PLK1 in vitro; however such data require additional evidences in vivo. In Mus musculus (Mouse), this protein is Serine/threonine-protein kinase 10 (Stk10).